Reading from the N-terminus, the 95-residue chain is Co-chaperonin GroES (95 aa).

Residues 36–55 (QEGEVVAVGSGKTLDDGSKV) are disordered.

Belongs to the GroES chaperonin family. As to quaternary structure, heptamer of 7 subunits arranged in a ring. Interacts with the chaperonin GroEL.

It localises to the cytoplasm. Together with the chaperonin GroEL, plays an essential role in assisting protein folding. The GroEL-GroES system forms a nano-cage that allows encapsulation of the non-native substrate proteins and provides a physical environment optimized to promote and accelerate protein folding. GroES binds to the apical surface of the GroEL ring, thereby capping the opening of the GroEL channel. This Natranaerobius thermophilus (strain ATCC BAA-1301 / DSM 18059 / JW/NM-WN-LF) protein is Co-chaperonin GroES.